The chain runs to 515 residues: MNDQVIIFDTTLRDGEQALSASLTVKEKLQIAYALERLGVDVIEAGFPVSSPGDFESVQTIARNIKNSRVCALSRAVEKDIDAAAEALKVAEAFRIHTFISTSTIHVQDKLRRSYDDVVEMGVRAVKHARKYTDDVEFSCEDAGRTPIDNLCRMVEAAINAGARTINIPDTVGYTVPSEFGGIIQTLFNRVPNIDKAIISVHCHDDLGMSVANSIAAVQAGARQVEGTINGIGERAGNCSLEEIAMIIKTRQELLGVRTGINHEEIHRTSKLVSQLCNMPIQANKAIVGANAFSHSSGIHQDGMLKNKNTYEIMTPESIGLKNQALNLTSRSGRAAVKSHMDAMGYKEDEYNLDALYQDFLKLADRKGQVFDYDLEALMHFSNLREEDDYYKLNYLSVQSGSVMATTSIKLLCGDEEKCEAAVGNGPVDALYQCIYRLTGYDIVLDKFDLTAKGEGEDGLGQADIIANYKGRKYHGTGISTDIVEASGQALLHVINSIHRADEIAEMKQKKIATV.

In terms of domain architecture, Pyruvate carboxyltransferase spans 5–267 (VIIFDTTLRD…RTGINHEEIH (263 aa)). Residues D14, H202, H204, and N238 each contribute to the Mn(2+) site. Residues 392–515 (KLNYLSVQSG…EMKQKKIATV (124 aa)) are regulatory domain.

This sequence belongs to the alpha-IPM synthase/homocitrate synthase family. LeuA type 1 subfamily. In terms of assembly, homodimer. It depends on Mn(2+) as a cofactor.

The protein localises to the cytoplasm. It catalyses the reaction 3-methyl-2-oxobutanoate + acetyl-CoA + H2O = (2S)-2-isopropylmalate + CoA + H(+). The protein operates within amino-acid biosynthesis; L-leucine biosynthesis; L-leucine from 3-methyl-2-oxobutanoate: step 1/4. Functionally, catalyzes the condensation of the acetyl group of acetyl-CoA with 3-methyl-2-oxobutanoate (2-ketoisovalerate) to form 3-carboxy-3-hydroxy-4-methylpentanoate (2-isopropylmalate). This Vibrio vulnificus (strain CMCP6) protein is 2-isopropylmalate synthase.